The following is a 114-amino-acid chain: T-cell leukemia/lymphoma protein 1A (114 aa).

The protein belongs to the TCL1 family. Homodimer. Interacts with AKT1, AKT2 and AKT3 (via PH domain). Interacts with PNPT1; the interaction has no effect on PNPT1 exonuclease activity. In terms of tissue distribution, restricted in the T-cell lineage to immature thymocytes and activated peripheral lymphocytes. Preferentially expressed early in T- and B-lymphocyte differentiation.

The protein resides in the cytoplasm. Its subcellular location is the nucleus. It localises to the microsome. The protein localises to the endoplasmic reticulum. In terms of biological role, enhances the phosphorylation and activation of AKT1, AKT2 and AKT3. Promotes nuclear translocation of AKT1. Enhances cell proliferation, stabilizes mitochondrial membrane potential and promotes cell survival. The polypeptide is T-cell leukemia/lymphoma protein 1A (TCL1A) (Homo sapiens (Human)).